The chain runs to 530 residues: Bifunctional purine biosynthesis protein PurH (530 aa).

The MGS-like domain occupies 1 to 148; that stretch reads MNNARPIRRA…KNHKDVTIVV (148 aa).

Belongs to the PurH family.

The enzyme catalyses (6R)-10-formyltetrahydrofolate + 5-amino-1-(5-phospho-beta-D-ribosyl)imidazole-4-carboxamide = 5-formamido-1-(5-phospho-D-ribosyl)imidazole-4-carboxamide + (6S)-5,6,7,8-tetrahydrofolate. The catalysed reaction is IMP + H2O = 5-formamido-1-(5-phospho-D-ribosyl)imidazole-4-carboxamide. The protein operates within purine metabolism; IMP biosynthesis via de novo pathway; 5-formamido-1-(5-phospho-D-ribosyl)imidazole-4-carboxamide from 5-amino-1-(5-phospho-D-ribosyl)imidazole-4-carboxamide (10-formyl THF route): step 1/1. Its pathway is purine metabolism; IMP biosynthesis via de novo pathway; IMP from 5-formamido-1-(5-phospho-D-ribosyl)imidazole-4-carboxamide: step 1/1. This Vibrio vulnificus (strain YJ016) protein is Bifunctional purine biosynthesis protein PurH.